Here is a 160-residue protein sequence, read N- to C-terminus: MMERMHNLNNVYLKECIHFLDSCINALKEFDLRTFISRFYYGMLYLLNAFEFYIRENIEDWHNKDRYANFSKKIRNFLMDLKLYRHASDYILSPRLEHGKHYEEHWEEFKESYLKLKFFHYLHILRQELYSYRHNQLIAIIIEKLEIIEKLLKLYIMLEE.

This is an uncharacterized protein from Methanocaldococcus jannaschii (strain ATCC 43067 / DSM 2661 / JAL-1 / JCM 10045 / NBRC 100440) (Methanococcus jannaschii).